The primary structure comprises 161 residues: Nucleotide-binding protein ABO_0048 (161 aa).

The protein belongs to the YajQ family.

In terms of biological role, nucleotide-binding protein. This Alcanivorax borkumensis (strain ATCC 700651 / DSM 11573 / NCIMB 13689 / SK2) protein is Nucleotide-binding protein ABO_0048.